The following is a 632-amino-acid chain: Polygalacturonase non-catalytic subunit AroGP3 (632 aa).

The first 27 residues, 1 to 27, serve as a signal peptide directing secretion; sequence MHTKILLPSCILLLLLFTLSSLDVVVA. A propeptide spanning residues 28-109 is cleaved from the precursor; it reads KDGDESGNPF…MCALDLLPSL (82 aa). Residues N125, N143, N258, N280, N336, N371, and N389 are each glycosylated (N-linked (GlcNAc...) asparagine). The region spanning 417–631 is the BURP domain; it reads FFREKMLKSG…FENDMTWATA (215 aa).

Interacts with polygalacturonase to form heterodimers.

Its subcellular location is the secreted. The protein resides in the extracellular space. The protein localises to the apoplast. It localises to the cell wall. In terms of biological role, non-catalytic subunit of polygalacturonase. The sequence is that of Polygalacturonase non-catalytic subunit AroGP3 (GP3) from Solanum lycopersicum (Tomato).